The following is a 306-amino-acid chain: Bifunctional protein FolD (306 aa).

Residues 164-166 (GRS), Ser-189, and Thr-230 contribute to the NADP(+) site.

The protein belongs to the tetrahydrofolate dehydrogenase/cyclohydrolase family. As to quaternary structure, homodimer.

The enzyme catalyses (6R)-5,10-methylene-5,6,7,8-tetrahydrofolate + NADP(+) = (6R)-5,10-methenyltetrahydrofolate + NADPH. It carries out the reaction (6R)-5,10-methenyltetrahydrofolate + H2O = (6R)-10-formyltetrahydrofolate + H(+). It functions in the pathway one-carbon metabolism; tetrahydrofolate interconversion. Catalyzes the oxidation of 5,10-methylenetetrahydrofolate to 5,10-methenyltetrahydrofolate and then the hydrolysis of 5,10-methenyltetrahydrofolate to 10-formyltetrahydrofolate. In Solibacter usitatus (strain Ellin6076), this protein is Bifunctional protein FolD.